We begin with the raw amino-acid sequence, 473 residues long: 3-isopropylmalate dehydratase large subunit (473 aa).

Cys-348, Cys-408, and Cys-411 together coordinate [4Fe-4S] cluster.

The protein belongs to the aconitase/IPM isomerase family. LeuC type 1 subfamily. Heterodimer of LeuC and LeuD. [4Fe-4S] cluster is required as a cofactor.

It catalyses the reaction (2R,3S)-3-isopropylmalate = (2S)-2-isopropylmalate. Its pathway is amino-acid biosynthesis; L-leucine biosynthesis; L-leucine from 3-methyl-2-oxobutanoate: step 2/4. Functionally, catalyzes the isomerization between 2-isopropylmalate and 3-isopropylmalate, via the formation of 2-isopropylmaleate. The polypeptide is 3-isopropylmalate dehydratase large subunit (Haloarcula marismortui (strain ATCC 43049 / DSM 3752 / JCM 8966 / VKM B-1809) (Halobacterium marismortui)).